The chain runs to 343 residues: Anthranilate phosphoribosyltransferase (343 aa).

5-phospho-alpha-D-ribose 1-diphosphate-binding positions include glycine 84, 87–88 (GD), threonine 92, 94–97 (NIST), 112–120 (KHGNRGVSS), and serine 124. Glycine 84 contributes to the anthranilate binding site. A Mg(2+)-binding site is contributed by serine 96. Asparagine 115 is a binding site for anthranilate. Residue arginine 170 coordinates anthranilate. Mg(2+) contacts are provided by aspartate 229 and glutamate 230.

This sequence belongs to the anthranilate phosphoribosyltransferase family. In terms of assembly, homodimer. Requires Mg(2+) as cofactor.

It carries out the reaction N-(5-phospho-beta-D-ribosyl)anthranilate + diphosphate = 5-phospho-alpha-D-ribose 1-diphosphate + anthranilate. It functions in the pathway amino-acid biosynthesis; L-tryptophan biosynthesis; L-tryptophan from chorismate: step 2/5. Catalyzes the transfer of the phosphoribosyl group of 5-phosphorylribose-1-pyrophosphate (PRPP) to anthranilate to yield N-(5'-phosphoribosyl)-anthranilate (PRA). The polypeptide is Anthranilate phosphoribosyltransferase (Burkholderia orbicola (strain AU 1054)).